A 70-amino-acid polypeptide reads, in one-letter code: ATP synthase subunit c (70 aa).

2 consecutive transmembrane segments (helical) span residues 4 to 24 and 47 to 67; these read IAAA…NGLI and FIGI…SFIV.

It belongs to the ATPase C chain family. As to quaternary structure, F-type ATPases have 2 components, F(1) - the catalytic core - and F(0) - the membrane proton channel. F(1) has five subunits: alpha(3), beta(3), gamma(1), delta(1), epsilon(1). F(0) has three main subunits: a(1), b(2) and c(10-14). The alpha and beta chains form an alternating ring which encloses part of the gamma chain. F(1) is attached to F(0) by a central stalk formed by the gamma and epsilon chains, while a peripheral stalk is formed by the delta and b chains.

The protein resides in the cell membrane. Its function is as follows. F(1)F(0) ATP synthase produces ATP from ADP in the presence of a proton or sodium gradient. F-type ATPases consist of two structural domains, F(1) containing the extramembraneous catalytic core and F(0) containing the membrane proton channel, linked together by a central stalk and a peripheral stalk. During catalysis, ATP synthesis in the catalytic domain of F(1) is coupled via a rotary mechanism of the central stalk subunits to proton translocation. Key component of the F(0) channel; it plays a direct role in translocation across the membrane. A homomeric c-ring of between 10-14 subunits forms the central stalk rotor element with the F(1) delta and epsilon subunits. This is ATP synthase subunit c from Staphylococcus carnosus (strain TM300).